A 238-amino-acid chain; its full sequence is Peroxisomal coenzyme A diphosphatase NUDT7 (238 aa).

K20 is modified (N6-succinyllysine). Positions 37 to 172 constitute a Nudix hydrolase domain; it reads YNKYSVLLPL…VTRLGHRFIN (136 aa). The short motif at 77 to 98 is the Nudix box element; the sequence is KRDPTDMDDAATALREAQEEVG. Positions 92 and 96 each coordinate Mg(2+). The short motif at 236–238 is the Microbody targeting signal element; it reads SRL.

Belongs to the Nudix hydrolase family. PCD1 subfamily. In terms of assembly, monomer. The cofactor is Mn(2+). Requires Mg(2+) as cofactor. Expressed in liver, kidney, pancreas, pituitary, small intestine, spleen, heart and placenta. Weakly expressed in brain.

It localises to the peroxisome. The enzyme catalyses hexanoyl-CoA + H2O = hexanoyl-4'-phosphopantetheine + adenosine 3',5'-bisphosphate + 2 H(+). It catalyses the reaction octanoyl-CoA + H2O = S-octanoyl-4'-phosphopantetheine + adenosine 3',5'-bisphosphate + 2 H(+). The catalysed reaction is butanoyl-CoA + H2O = S-butanoyl-4'-phosphopantetheine + adenosine 3',5'-bisphosphate + 2 H(+). It carries out the reaction decanoyl-CoA + H2O = decanoyl-4'-phosphopantetheine + adenosine 3',5'-bisphosphate + 2 H(+). The enzyme catalyses dodecanoyl-CoA + H2O = S-dodecanoyl-4'-phosphopantetheine + adenosine 3',5'-bisphosphate + 2 H(+). It catalyses the reaction tetradecanoyl-CoA + H2O = tetradecanoyl-4'-phosphopantetheine + adenosine 3',5'-bisphosphate + 2 H(+). The catalysed reaction is choloyl-CoA + H2O = S-choloyl-4'-phosphopantetheine + adenosine 3',5'-bisphosphate + 2 H(+). It carries out the reaction 3alpha,7alpha,12alpha-trihydroxy-5beta-cholestan-26-oyl-CoA + H2O = 3alpha,7alpha,12alpha-trihydroxy-5beta-cholestan-26-oyl-4'-phosphopantetheine + adenosine 3',5'-bisphosphate + 2 H(+). The enzyme catalyses acetyl-CoA + H2O = S-acetyl-4'-phosphopantetheine + adenosine 3',5'-bisphosphate + 2 H(+). It catalyses the reaction CoA + H2O = (R)-4'-phosphopantetheine + adenosine 3',5'-bisphosphate + 2 H(+). The catalysed reaction is propanoyl-CoA + H2O = propanoyl-4'-phosphopantetheine + adenosine 3',5'-bisphosphate + 2 H(+). It carries out the reaction malonyl-CoA + H2O = malonyl-4'-phosphopantetheine + adenosine 3',5'-bisphosphate + 2 H(+). The enzyme catalyses succinyl-CoA + H2O = succinyl-4'-phosphopantetheine + adenosine 3',5'-bisphosphate + 2 H(+). It catalyses the reaction a 5'-end CoA-ribonucleoside in mRNA + H2O = a 5'-end phospho-adenosine-phospho-ribonucleoside in mRNA + (R)-4'-phosphopantetheine + 2 H(+). Inhibited by fluoride. Fatty acyl-coenzyme A (CoA) diphosphatase that hydrolyzes fatty acyl-CoA to yield acyl-4'-phosphopantetheine and adenosine 3',5'-bisphosphate. Cleaves CoA, CoA esters and oxidized CoA with similar efficiencies. Preferentially hydrolyzes medium-chain acyl-CoAs and bile acid-CoAs. Has no activity toward NDP-sugars, CDP-alcohols, (deoxy)nucleoside 5'-triphosphates, nucleoside 5'-di or monophosphates, diadenosine polyphosphates, NAD, NADH, NADP, NADPH or thymidine-5'-monophospho-p-nitrophenyl ester. May be required to eliminate oxidized CoA from peroxisomes, or regulate CoA and acyl-CoA levels in this organelle in response to metabolic demand. Does not play a role in U8 snoRNA decapping activity. Binds U8 snoRNA. Exhibits decapping activity towards dpCoA-capped RNAs in vitro. This is Peroxisomal coenzyme A diphosphatase NUDT7 from Homo sapiens (Human).